Here is a 299-residue protein sequence, read N- to C-terminus: 4-hydroxy-tetrahydrodipicolinate synthase (299 aa).

A pyruvate-binding site is contributed by T50. Residue Y139 is the Proton donor/acceptor of the active site. K167 acts as the Schiff-base intermediate with substrate in catalysis. A pyruvate-binding site is contributed by V209.

The protein belongs to the DapA family. As to quaternary structure, homotetramer; dimer of dimers.

It localises to the cytoplasm. The enzyme catalyses L-aspartate 4-semialdehyde + pyruvate = (2S,4S)-4-hydroxy-2,3,4,5-tetrahydrodipicolinate + H2O + H(+). It functions in the pathway amino-acid biosynthesis; L-lysine biosynthesis via DAP pathway; (S)-tetrahydrodipicolinate from L-aspartate: step 3/4. Catalyzes the condensation of (S)-aspartate-beta-semialdehyde [(S)-ASA] and pyruvate to 4-hydroxy-tetrahydrodipicolinate (HTPA). The polypeptide is 4-hydroxy-tetrahydrodipicolinate synthase (Synechococcus elongatus (strain ATCC 33912 / PCC 7942 / FACHB-805) (Anacystis nidulans R2)).